The sequence spans 233 residues: Ribosomal RNA small subunit methyltransferase G (233 aa).

Residues Gly-96, Leu-101, 146–147, and Arg-160 each bind S-adenosyl-L-methionine; that span reads LE.

It belongs to the methyltransferase superfamily. RNA methyltransferase RsmG family.

It localises to the cytoplasm. It catalyses the reaction guanosine(527) in 16S rRNA + S-adenosyl-L-methionine = N(7)-methylguanosine(527) in 16S rRNA + S-adenosyl-L-homocysteine. Specifically methylates the N7 position of guanine in position 527 of 16S rRNA. This Sphingopyxis alaskensis (strain DSM 13593 / LMG 18877 / RB2256) (Sphingomonas alaskensis) protein is Ribosomal RNA small subunit methyltransferase G.